Consider the following 309-residue polypeptide: Transcription termination/antitermination protein NusG (309 aa).

Disordered regions lie at residues 1-24 (MSDPNLNDDATEPRGLAADTADDE) and 58-91 (EGDHIAETDEDIEAGAVETDEDVETDTDEDVEAG). Acidic residues predominate over residues 65–91 (TDEDIEAGAVETDEDVETDTDEDVEAG).

The protein belongs to the NusG family.

Functionally, participates in transcription elongation, termination and antitermination. This is Transcription termination/antitermination protein NusG from Streptomyces galbus.